Reading from the N-terminus, the 380-residue chain is Probable inactive dehydrogenase easA (380 aa).

FMN-binding positions include 25-27, Ala60, Gln102, and His171; that span reads PMT. Residues His171 and Asn174 each contribute to the substrate site. FMN is bound by residues Lys223, Gly299, 324–325, and Arg325; that span reads GR. Substrate is bound at residue Tyr352.

It belongs to the NADH:flavin oxidoreductase/NADH oxidase family.

In terms of biological role, probable inactive dehydrogenase; part of the gene cluster that mediates the biosynthesis of fungal ergot alkaloid. DmaW catalyzes the first step of ergot alkaloid biosynthesis by condensing dimethylallyl diphosphate (DMAP) and tryptophan to form 4-dimethylallyl-L-tryptophan. The second step is catalyzed by the methyltransferase easF that methylates 4-dimethylallyl-L-tryptophan in the presence of S-adenosyl-L-methionine, resulting in the formation of 4-dimethylallyl-L-abrine. The catalase easC and the FAD-dependent oxidoreductase easE then transform 4-dimethylallyl-L-abrine to chanoclavine-I which is further oxidized by easD in the presence of NAD(+), resulting in the formation of chanoclavine-I aldehyde. Agroclavine dehydrogenase easG then mediates the conversion of chanoclavine-I aldehyde to agroclavine via a non-enzymatic adduct reaction: the substrate is an iminium intermediate that is formed spontaneously from chanoclavine-I aldehyde in the presence of glutathione. The presence of easA is not required to complete this reaction. Further conversion of agroclavine to paspalic acid is a two-step process involving oxidation of agroclavine to elymoclavine and of elymoclavine to paspalic acid, the second step being performed by the elymoclavine oxidase cloA. Paspalic acid is then further converted to D-lysergic acid. Ergopeptines are assembled from D-lysergic acid and three different amino acids by the D-lysergyl-peptide-synthetases composed each of a monomudular and a trimodular nonribosomal peptide synthetase subunit. LpsB and lpsC encode the monomodular subunits responsible for D-lysergic acid activation and incorporation into the ergopeptine backbone. LpsA1 and A2 subunits encode the trimodular nonribosomal peptide synthetase assembling the tripeptide portion of ergopeptines. LpsA1 is responsible for formation of the major ergopeptine, ergotamine, and lpsA2 for alpha-ergocryptine, the minor ergopeptine of the total alkaloid mixture elaborated by C.purpurea. D-lysergyl-tripeptides are assembled by the nonribosomal peptide synthetases and released as N-(D-lysergyl-aminoacyl)-lactams. Cyclolization of the D-lysergyl-tripeptides is performed by the Fe(2+)/2-ketoglutarate-dependent dioxygenase easH which introduces a hydroxyl group into N-(D-lysergyl-aminoacyl)-lactam at alpha-C of the aminoacyl residue followed by spontaneous condensation with the terminal lactam carbonyl group. This is Probable inactive dehydrogenase easA from Claviceps purpurea (strain 20.1) (Ergot fungus).